A 376-amino-acid chain; its full sequence is Heat-inducible transcription repressor HrcA (376 aa).

The protein belongs to the HrcA family.

Its function is as follows. Negative regulator of class I heat shock genes (grpE-dnaK-dnaJ and groELS operons). Prevents heat-shock induction of these operons. The chain is Heat-inducible transcription repressor HrcA from Nostoc punctiforme (strain ATCC 29133 / PCC 73102).